A 162-amino-acid chain; its full sequence is NADH-quinone oxidoreductase subunit I (162 aa).

4Fe-4S ferredoxin-type domains are found at residues 53 to 83 and 93 to 122; these read LRRY…IEAE and TRYD…EGPN. [4Fe-4S] cluster contacts are provided by C63, C66, C69, C73, C102, C105, C108, and C112.

Belongs to the complex I 23 kDa subunit family. NDH-1 is composed of 14 different subunits. Subunits NuoA, H, J, K, L, M, N constitute the membrane sector of the complex. [4Fe-4S] cluster serves as cofactor.

The protein resides in the cell inner membrane. The catalysed reaction is a quinone + NADH + 5 H(+)(in) = a quinol + NAD(+) + 4 H(+)(out). Its function is as follows. NDH-1 shuttles electrons from NADH, via FMN and iron-sulfur (Fe-S) centers, to quinones in the respiratory chain. The immediate electron acceptor for the enzyme in this species is believed to be ubiquinone. Couples the redox reaction to proton translocation (for every two electrons transferred, four hydrogen ions are translocated across the cytoplasmic membrane), and thus conserves the redox energy in a proton gradient. This chain is NADH-quinone oxidoreductase subunit I, found in Rhodospirillum centenum (strain ATCC 51521 / SW).